The primary structure comprises 169 residues: Large ribosomal subunit protein bL17 (169 aa).

The disordered stretch occupies residues 124 to 169 (EKAVKRQDRSRRVKGSKKAIDEKTSDDSASVEAAPAAPEAEEKKDA). Basic residues predominate over residues 131-140 (DRSRRVKGSK). A compositionally biased stretch (low complexity) spans 150–161 (DSASVEAAPAAP).

Belongs to the bacterial ribosomal protein bL17 family. As to quaternary structure, part of the 50S ribosomal subunit. Contacts protein L32.

The chain is Large ribosomal subunit protein bL17 from Chloroherpeton thalassium (strain ATCC 35110 / GB-78).